Reading from the N-terminus, the 241-residue chain is MELATESIEGVLLVDKPQGRTSFSLIRSLVRLIGVKKIGHAGTLDPFATGVMVMLIGRKFTRLSDIMLFEDKEYAAVAHLGTTTDTYDCDGKIVGRSKKVPTMDEVLTCTSYFQGEIQQVPPMFSAKKVQGKKLYEYARQGLSIERRFATVTVNLRLVKYEYPRLHFVVQCSKGTYIRSIAHELGNMLGCGAYLEELRRLRSGSFSIDQCIDGNLLDEPEFNVSPYLRDANGLILQPAPVL.

D45 (nucleophile) is an active-site residue.

The protein belongs to the pseudouridine synthase TruB family. Type 1 subfamily.

The catalysed reaction is uridine(55) in tRNA = pseudouridine(55) in tRNA. Its function is as follows. Responsible for synthesis of pseudouridine from uracil-55 in the psi GC loop of transfer RNAs. In Chlamydia trachomatis serovar L2 (strain ATCC VR-902B / DSM 19102 / 434/Bu), this protein is tRNA pseudouridine synthase B.